A 234-amino-acid polypeptide reads, in one-letter code: CHD1 helical C-terminal domain containing protein 1 (234 aa).

Positions Met1–Val38 are disordered. The tract at residues Leu44–Ala145 is CHD1 helical C-terminal domain (CHCT). Positions Leu200–Leu234 are disordered.

The protein localises to the cytoplasm. Its subcellular location is the nucleus. Functionally, may play a role in regulation of apoptosis. This Bos taurus (Bovine) protein is CHD1 helical C-terminal domain containing protein 1 (CHCT1).